A 161-amino-acid chain; its full sequence is Efficient mitochondria targeting-associated protein 19 (161 aa).

At 1–10 (MKLGHREQQF) the chain is on the cytoplasmic side. The 153-residue stretch at 7-159 (EQQFYLWYFI…PTFLIPLRLC (153 aa)) folds into the EXPERA domain. Residues 11–31 (YLWYFIVHIPITIFIDSSVVI) traverse the membrane as a helical segment. Topologically, residues 32–61 (PAKWQLGIAQKVVSDHIAKQHDFLLSEKPE) are lumenal. The helical transmembrane segment at 62-82 (WLYWFVVLELVLQLPLFVYFV) threads the bilayer. Topologically, residues 83–101 (NKFWNSSELQVNTNSRLKK) are cytoplasmic. The chain crosses the membrane as a helical span at residues 102–122 (WLRIYGWNASLTTLICIVVIF). The Lumenal portion of the chain corresponds to 123–141 (KRGYIPYDVLKTSLSMTQK). A helical membrane pass occupies residues 142-160 (CQLASVYLPTFLIPLRLCF). V161 is a topological domain (cytoplasmic).

This sequence belongs to the TMEM97/sigma-2 receptor family.

It is found in the endoplasmic reticulum membrane. Its function is as follows. Part of an import route for newly synthesized mitochondrial proteins termed the ER-SURF pathway (ER surface-mediated protein targeting), which retrieves mitochondrial precursor proteins from the ER surface and reroutes them to mitochondria for efficient mitochondrial import. Acts as a quality control factor in the ER, promoting the proteolytic degradation of nonproductive and extramitochondrial precursor proteins in the ER membrane thus removing them from the ER surface. The sequence is that of Efficient mitochondria targeting-associated protein 19 from Saccharomyces cerevisiae (strain ATCC 204508 / S288c) (Baker's yeast).